The following is a 402-amino-acid chain: GPI mannosyltransferase 1 (402 aa).

The next 10 membrane-spanning stretches (helical) occupy residues 5–25, 79–99, 108–128, 162–182, 191–211, 238–258, 260–280, 309–329, 333–353, and 365–385; these read VILL…YGIF, WIHM…VMII, LTKQ…ITIS, LSIH…IYLL, IWRL…PTYF, FSIW…SQSI, LSKL…YLLW, QYFI…TITW, VVCI…AYLL, and LFFG…VFIT.

Belongs to the PIGM family.

The protein resides in the endoplasmic reticulum membrane. The protein operates within glycolipid biosynthesis; glycosylphosphatidylinositol-anchor biosynthesis. In terms of biological role, mannosyltransferase involved in glycosylphosphatidylinositol-anchor biosynthesis. Transfers the first alpha-1,4-mannose to GlcN-acyl-PI during GPI precursor assembly. Required for cell wall integrity. This Kluyveromyces lactis (strain ATCC 8585 / CBS 2359 / DSM 70799 / NBRC 1267 / NRRL Y-1140 / WM37) (Yeast) protein is GPI mannosyltransferase 1 (GPI14).